A 206-amino-acid chain; its full sequence is Glycerol-3-phosphate acyltransferase (206 aa).

The next 6 helical transmembrane spans lie at 4–24 (TAFA…AVIV), 53–73 (LAAA…VALA), 86–106 (GIAL…FFGF), 116–136 (VGIL…TWLF), 137–157 (MAFV…LAPV), and 160–180 (FFIL…AIVV).

Belongs to the PlsY family. In terms of assembly, probably interacts with PlsX.

The protein localises to the cell inner membrane. The catalysed reaction is an acyl phosphate + sn-glycerol 3-phosphate = a 1-acyl-sn-glycero-3-phosphate + phosphate. The protein operates within lipid metabolism; phospholipid metabolism. Catalyzes the transfer of an acyl group from acyl-phosphate (acyl-PO(4)) to glycerol-3-phosphate (G3P) to form lysophosphatidic acid (LPA). This enzyme utilizes acyl-phosphate as fatty acyl donor, but not acyl-CoA or acyl-ACP. This chain is Glycerol-3-phosphate acyltransferase, found in Chromobacterium violaceum (strain ATCC 12472 / DSM 30191 / JCM 1249 / CCUG 213 / NBRC 12614 / NCIMB 9131 / NCTC 9757 / MK).